A 70-amino-acid chain; its full sequence is Dermaseptin-PH (70 aa).

Positions 1-22 are cleaved as a signal peptide; sequence MDILKKSLFLILFLGVVSLSIC. Positions 23-44 are excised as a propeptide; the sequence is EEEKRENEEEMEQDDEQSEMKR. Residue Q67 is modified to Glutamine amide. Residues 68-70 constitute a propeptide that is removed on maturation; sequence GGQ.

It belongs to the frog skin active peptide (FSAP) family. In terms of tissue distribution, expressed by the skin glands.

Its subcellular location is the secreted. The protein localises to the target cell membrane. In terms of biological role, antimicrobial peptide which inhibits the growth of Gram-negative (MIC=16-64 uM) and Gram-positive bacteria (MIC=32 uM), and pathogenic yeast Candida albicans (MIC=16 uM). Shows a broad-spectrum of anticancer activities against several cancer cell lines. Also shows slight cytotoxicity on human dermal microvascular endothelium cells (IC(50)=4.85 uM). Induces low hemolysis against horse erythrocytes. The chain is Dermaseptin-PH from Pithecopus hypochondrialis (Orange-legged leaf frog).